Reading from the N-terminus, the 393-residue chain is S-adenosylmethionine synthase (393 aa).

H16 lines the ATP pocket. D18 contributes to the Mg(2+) binding site. K(+) is bound at residue E44. 2 residues coordinate L-methionine: E57 and Q100. Residues 100 to 110 form a flexible loop region; sequence QSNDIAQGVDH. ATP-binding positions include 167–169, 238–239, D247, 253–254, A270, and K274; these read DAK, RF, and RK. L-methionine is bound at residue D247. Residue K278 participates in L-methionine binding.

It belongs to the AdoMet synthase family. Homotetramer; dimer of dimers. It depends on Mg(2+) as a cofactor. K(+) serves as cofactor.

It localises to the cytoplasm. It catalyses the reaction L-methionine + ATP + H2O = S-adenosyl-L-methionine + phosphate + diphosphate. It participates in amino-acid biosynthesis; S-adenosyl-L-methionine biosynthesis; S-adenosyl-L-methionine from L-methionine: step 1/1. In terms of biological role, catalyzes the formation of S-adenosylmethionine (AdoMet) from methionine and ATP. The overall synthetic reaction is composed of two sequential steps, AdoMet formation and the subsequent tripolyphosphate hydrolysis which occurs prior to release of AdoMet from the enzyme. In Acidovorax ebreus (strain TPSY) (Diaphorobacter sp. (strain TPSY)), this protein is S-adenosylmethionine synthase.